The primary structure comprises 31 residues: Conotoxin pc6d (31 aa).

3 disulfide bridges follow: C2/C20, C9/C25, and C19/C29.

Belongs to the conotoxin O1 superfamily. Expressed by the venom duct.

It is found in the secreted. This is Conotoxin pc6d from Conus pictus (Cone snail).